We begin with the raw amino-acid sequence, 527 residues long: DNA polymerase epsilon subunit 2 (527 aa).

The protein belongs to the DNA polymerase epsilon subunit B family. Component of the DNA polymerase epsilon complex consisting of four subunits: the catalytic subunit POLE and the accessory subunits POLE2, POLE3 and POLE4.

It localises to the nucleus. In terms of biological role, accessory component of the DNA polymerase epsilon complex. Participates in DNA repair and in chromosomal DNA replication. The polypeptide is DNA polymerase epsilon subunit 2 (Homo sapiens (Human)).